Consider the following 607-residue polypeptide: Protein NRT1/ PTR FAMILY 1.2 (607 aa).

10 consecutive transmembrane segments (helical) span residues 65–85, 96–116, 138–158, 185–205, 215–235, 374–394, 418–438, 460–480, 496–516, and 544–564; these read TNVLFMWSAASNFTPLLGAFL, ISIASLSSFLGMVLLWLTAML, ASQLALLYSAFALISIGSGGI, FFGWYYASSAVAVLIAFTGIV, IGFGVPAVLMLIAALLFILAS, VPAGSFGMFTIIALALWVILY, MGLGLFMSFLAMAISAMVESF, AMWLVPQYVLHGLAEALTAIG, IAASLFGLGMAVASLLASVVL, and YYWVLAIMSFINVIYYVICSW. S601 carries the phosphoserine modification.

The protein belongs to the major facilitator superfamily. Proton-dependent oligopeptide transporter (POT/PTR) (TC 2.A.17) family. As to expression, expressed in shoots, stems, leaves, flowers and siliques. Mainly detected in larger expanded leaves, in the companion cells of major veins.

The protein resides in the cell membrane. In terms of biological role, low-affinity nitrate transporter involved in xylem-to-phloem transfer for redistributing nitrate into developing leaves. Not involved in dipeptides transport. The sequence is that of Protein NRT1/ PTR FAMILY 1.2 (NPF1.2) from Arabidopsis thaliana (Mouse-ear cress).